A 338-amino-acid polypeptide reads, in one-letter code: Arginase, mitochondrial (338 aa).

A mitochondrion-targeting transit peptide spans 1–15 (MSTIARRGFHYMQRL). L-ornithine is bound by residues Ser73 and 92 to 95 (DSTN). Positions 157, 181, 183, and 185 each coordinate Mn(2+). 185 to 187 (DLY) serves as a coordination point for L-ornithine. Residue 191-193 (EGN) coordinates substrate. Ser220 serves as a coordination point for L-ornithine. Mn(2+)-binding residues include Asp266 and Asp268. Position 309 (Glu309) interacts with substrate.

It belongs to the arginase family. As to quaternary structure, forms homohexamers. Requires Mn(2+) as cofactor.

The protein localises to the mitochondrion. The enzyme catalyses L-arginine + H2O = urea + L-ornithine. The catalysed reaction is agmatine + H2O = urea + putrescine. The protein operates within nitrogen metabolism; urea cycle; L-ornithine and urea from L-arginine: step 1/1. It functions in the pathway amine and polyamine biosynthesis; putrescine biosynthesis via agmatine pathway; putrescine from agmatine: step 1/1. Functionally, catalyzes the hydrolysis of L-arginine to urea and L-ornithine. The latter can be utilized in the urea cycle or as a precursor for the synthesis of both polyamines and proline. Possesses agmatinase activity. Catalyzes the formation of putrescine from agmatine. In Medicago truncatula (Barrel medic), this protein is Arginase, mitochondrial.